Consider the following 99-residue polypeptide: MKFFVIALIVLLGLLQYRLWSGSNSLPEYFVLQKHIAVQQEGNDKLNERNQVLKEEIIDLKSGTEAIEERARNELGMVKEGETFYRVVGGERSVSSPSQ.

Over 1-3 (MKF) the chain is Cytoplasmic. The chain crosses the membrane as a helical span at residues 4 to 21 (FVIALIVLLGLLQYRLWS). At 22-99 (GSNSLPEYFV…GERSVSSPSQ (78 aa)) the chain is on the periplasmic side. A coiled-coil region spans residues 36 to 73 (IAVQQEGNDKLNERNQVLKEEIIDLKSGTEAIEERARN).

It belongs to the FtsB family. In terms of assembly, part of a complex composed of FtsB, FtsL and FtsQ.

It localises to the cell inner membrane. Its function is as follows. Essential cell division protein. May link together the upstream cell division proteins, which are predominantly cytoplasmic, with the downstream cell division proteins, which are predominantly periplasmic. In Shewanella sp. (strain W3-18-1), this protein is Cell division protein FtsB.